The chain runs to 189 residues: Small ribosomal subunit protein uS5 (189 aa).

The S5 DRBM domain maps to 27 to 90 (FEERLLEAAR…EDAKKKTIRV (64 aa)).

Belongs to the universal ribosomal protein uS5 family. Part of the 30S ribosomal subunit. Contacts proteins S4 and S8.

With S4 and S12 plays an important role in translational accuracy. In terms of biological role, located at the back of the 30S subunit body where it stabilizes the conformation of the head with respect to the body. This chain is Small ribosomal subunit protein uS5, found in Hydrogenobaculum sp. (strain Y04AAS1).